A 190-amino-acid polypeptide reads, in one-letter code: Dynactin subunit 6 (190 aa).

The residue at position 186 (Thr-186) is a Phosphothreonine; by CDK1.

The protein belongs to the dynactin subunits 5/6 family. Dynactin subunit 6 subfamily. As to quaternary structure, subunit of dynactin, a multiprotein complex part of a tripartite complex with dynein and a adapter, such as BICDL1, BICD2 or HOOK3. The dynactin complex is built around ACTR1A/ACTB filament and consists of an actin-related filament composed of a shoulder domain, a pointed end and a barbed end. Its length is defined by its flexible shoulder domain. The soulder is composed of 2 DCTN1 subunits, 4 DCTN2 and 2 DCTN3. The 4 DCNT2 (via N-terminus) bind the ACTR1A filament and act as molecular rulers to determine the length. The pointed end is important for binding dynein-dynactin cargo adapters. Consists of 4 subunits: ACTR10, DCNT4, DCTN5 and DCTN6. Within the complex DCTN6 forms a heterodimer with DCTN5. The barbed end is composed of a CAPZA1:CAPZB heterodimers, which binds ACTR1A/ACTB filament and dynactin and stabilizes dynactin. Interacts with PLK1. Interacts with N4BP2L1. In terms of processing, phosphorylation at Thr-186 by CDK1 during mitotic prometaphase creates a binding site for PLK1 that facilitates its recruitment to kinetochores. In terms of tissue distribution, ubiquitous.

It localises to the cytoplasm. The protein localises to the cytoskeleton. Its subcellular location is the chromosome. The protein resides in the centromere. It is found in the kinetochore. In terms of biological role, part of the dynactin complex that activates the molecular motor dynein for ultra-processive transport along microtubules. The protein is Dynactin subunit 6 of Homo sapiens (Human).